We begin with the raw amino-acid sequence, 309 residues long: Carbamate kinase 2 (309 aa).

Belongs to the carbamate kinase family.

It is found in the cytoplasm. The enzyme catalyses hydrogencarbonate + NH4(+) + ATP = carbamoyl phosphate + ADP + H2O + H(+). Its pathway is metabolic intermediate metabolism; carbamoyl phosphate degradation; CO(2) and NH(3) from carbamoyl phosphate: step 1/1. This is Carbamate kinase 2 (arcC2) from Staphylococcus epidermidis (strain ATCC 12228 / FDA PCI 1200).